Here is a 325-residue protein sequence, read N- to C-terminus: UPF0285 protein MA_3856 (325 aa).

Belongs to the UPF0285 family.

This is UPF0285 protein MA_3856 from Methanosarcina acetivorans (strain ATCC 35395 / DSM 2834 / JCM 12185 / C2A).